The sequence spans 517 residues: Maturase K (517 aa).

It belongs to the intron maturase 2 family. MatK subfamily.

The protein localises to the plastid. It localises to the chloroplast. Usually encoded in the trnK tRNA gene intron. Probably assists in splicing its own and other chloroplast group II introns. In Palhinhaea cernua (Nodding clubmoss), this protein is Maturase K.